Consider the following 244-residue polypeptide: 7-cyano-7-deazaguanine synthase (244 aa).

14–24 (FSGGQDSATCV) contributes to the ATP binding site. Zn(2+)-binding residues include Cys202, Cys217, Cys220, and Cys223.

The protein belongs to the QueC family. It depends on Zn(2+) as a cofactor.

It catalyses the reaction 7-carboxy-7-deazaguanine + NH4(+) + ATP = 7-cyano-7-deazaguanine + ADP + phosphate + H2O + H(+). The protein operates within purine metabolism; 7-cyano-7-deazaguanine biosynthesis. Its function is as follows. Catalyzes the ATP-dependent conversion of 7-carboxy-7-deazaguanine (CDG) to 7-cyano-7-deazaguanine (preQ(0)). The sequence is that of 7-cyano-7-deazaguanine synthase from Burkholderia cenocepacia (strain HI2424).